A 383-amino-acid polypeptide reads, in one-letter code: Neuropeptide Y receptor type 1 (383 aa).

The Extracellular segment spans residues 1 to 34 (MNSTSFSQLENHSVHYNLSEEKPSFFAFENDDCH). Residues Asn2, Asn11, and Asn17 are each glycosylated (N-linked (GlcNAc...) asparagine). A helical membrane pass occupies residues 35-55 (LPLAVIFTLALAYGAVIILGV). The Cytoplasmic segment spans residues 56–87 (SGNLALILIILKQKEMRNVTNILIVNLSFSDL). Residues 88 to 108 (LVAIMCLPFTFVYTLMDHWIF) form a helical membrane-spanning segment. Residues 109 to 116 (GEIMCKLN) are Extracellular-facing. A disulfide bridge links Cys113 with Cys198. Residues 117–137 (PFVQCVSITVSIFSLVLIAVE) form a helical membrane-spanning segment. At 138–154 (RHQLIINPRGWRPNNRH) the chain is on the cytoplasmic side. Residues 155–175 (AYIGIAVIWVLAVASSLPFMI) form a helical membrane-spanning segment. Over 176–211 (YQVLTDEPFQNVTLDAFKDKLVCFDQFPSDSHRLSY) the chain is Extracellular. Residues 212–232 (TTLLLVLQYFGPLCFIFICYF) form a helical membrane-spanning segment. Residues 233–260 (KIYIRLKRRNNMMDKMRDSKYRSSESKR) lie on the Cytoplasmic side of the membrane. The chain crosses the membrane as a helical span at residues 261–281 (INIMLLSIVVAFAVCWLPLTI). Over 282–299 (FNTVFDWNHQIIATCNHN) the chain is Extracellular. The helical transmembrane segment at 300-320 (LLFLLCHLTAMISTCVNPIFY) threads the bilayer. The Cytoplasmic portion of the chain corresponds to 321 to 383 (GFLNKNFQRD…KISCVENEKI (63 aa)). The S-palmitoyl cysteine moiety is linked to residue Cys338. Ser368 and Ser376 each carry phosphoserine.

Belongs to the G-protein coupled receptor 1 family.

It localises to the cell membrane. Functionally, receptor for neuropeptide Y and peptide YY. In Cavia porcellus (Guinea pig), this protein is Neuropeptide Y receptor type 1 (NPY1R).